Reading from the N-terminus, the 477-residue chain is Stromelysin-1 (477 aa).

Positions 1–17 (MKGLPVLLWLCVVVCSS) are cleaved as a signal peptide. The propeptide at 18–99 (YPLHDSARDD…PRCGVPDVGG (82 aa)) is activation peptide. Positions 90-97 (PRCGVPDV) match the Cysteine switch motif. Cys92 contributes to the Zn(2+) binding site. Residues Asp124 and Asp158 each contribute to the Ca(2+) site. Zn(2+) contacts are provided by His168 and Asp170. Residues Asp175, Gly176, Gly178, and Val180 each contribute to the Ca(2+) site. His183 is a binding site for Zn(2+). The Ca(2+) site is built by Gly190, Asn192, and Asp194. His196 contributes to the Zn(2+) binding site. Ca(2+) is bound by residues Asp198, Asp199, and Glu201. His218 is a binding site for Zn(2+). Residue Glu219 is part of the active site. His222 and His228 together coordinate Zn(2+). 4 Hemopexin repeats span residues 287–336 (SPMC…WPSL), 337–383 (PSNM…GLPA), 385–433 (VKKI…FPGV), and 434–477 (DSRV…WFNC). The cysteines at positions 290 and 477 are disulfide-linked. Asp297 serves as a coordination point for Ca(2+). Residues Asp389 and Asp438 each coordinate Ca(2+).

It belongs to the peptidase M10A family. The cofactor is Ca(2+). Zn(2+) is required as a cofactor.

The protein resides in the secreted. Its subcellular location is the extracellular space. The protein localises to the extracellular matrix. It carries out the reaction Preferential cleavage where P1', P2' and P3' are hydrophobic residues.. In terms of biological role, metalloproteinase with a rather broad substrate specificity that can degrade fibronectin, laminin, gelatins of type I, III, IV, and V; collagens III, IV, X, and IX, and cartilage proteoglycans. Activates different molecules including growth factors, plasminogen or other matrix metalloproteinases such as MMP9. Once released into the extracellular matrix (ECM), the inactive pro-enzyme is activated by the plasmin cascade signaling pathway. Also acts intracellularly. For example, in dopaminergic neurons, gets activated by the serine protease HTRA2 upon stress and plays a pivotal role in DA neuronal degeneration by mediating microglial activation and alpha-synuclein/SNCA cleavage. In addition, plays a role in immune response and possesses antiviral activity against various viruses. Mechanistically, translocates from the cytoplasm into the cell nucleus upon virus infection to influence NF-kappa-B activities. This is Stromelysin-1 (Mmp3) from Mus musculus (Mouse).